A 422-amino-acid chain; its full sequence is MRIVVNLKPEEIPKHWYNVLADLPFKLDPPLDPETKQPISPEKLSVIFPMSLIEQEVSEERFIEIPEPVLKEYAVYRPTPLIRATFLEEYLQTPARIYYKYEGVSPTGSHKPNTAIAQAYYNKIEGVKRLVTETGAGQWGSALSYAGAKFGLEVKVFMVKVSYQQKPMRKYMMNLFGGKVTPSPSEETNFGRKILSEDPDNPGSLGIAISEALEVAVSDPNTKYSLGSVLNHVLLHQTVIGLEIKKQLELIGEKPDILLGCHGGGSNFGGTILPFVPDKLSGRDIRFVACEPAACPSLTKGNYDYDFGDTAGLTPLLKMYTLGKDFIPPKIHAGGLRYHGSAPIIARLVKEGLVEAQAFDQDETFEAAKIFAKLEGIIPAPESAHAIAGAIREAKKAKEEGKERVIVFTLSGHGLLDLTAYV.

The residue at position 111 (Lys-111) is an N6-(pyridoxal phosphate)lysine.

Belongs to the TrpB family. As to quaternary structure, tetramer of two alpha and two beta chains. Pyridoxal 5'-phosphate serves as cofactor.

The enzyme catalyses (1S,2R)-1-C-(indol-3-yl)glycerol 3-phosphate + L-serine = D-glyceraldehyde 3-phosphate + L-tryptophan + H2O. It functions in the pathway amino-acid biosynthesis; L-tryptophan biosynthesis; L-tryptophan from chorismate: step 5/5. Functionally, the beta subunit is responsible for the synthesis of L-tryptophan from indole and L-serine. This chain is Tryptophan synthase beta chain 2 (trpB2), found in Thermotoga maritima (strain ATCC 43589 / DSM 3109 / JCM 10099 / NBRC 100826 / MSB8).